The sequence spans 137 residues: Nucleoside diphosphate kinase (137 aa).

Residues lysine 9, phenylalanine 57, arginine 85, threonine 91, arginine 102, and asparagine 112 each coordinate ATP. Histidine 115 serves as the catalytic Pros-phosphohistidine intermediate.

The protein belongs to the NDK family. As to quaternary structure, homotetramer. It depends on Mg(2+) as a cofactor.

The protein localises to the cytoplasm. The catalysed reaction is a 2'-deoxyribonucleoside 5'-diphosphate + ATP = a 2'-deoxyribonucleoside 5'-triphosphate + ADP. It catalyses the reaction a ribonucleoside 5'-diphosphate + ATP = a ribonucleoside 5'-triphosphate + ADP. Its function is as follows. Major role in the synthesis of nucleoside triphosphates other than ATP. The ATP gamma phosphate is transferred to the NDP beta phosphate via a ping-pong mechanism, using a phosphorylated active-site intermediate. The polypeptide is Nucleoside diphosphate kinase (Wolinella succinogenes (strain ATCC 29543 / DSM 1740 / CCUG 13145 / JCM 31913 / LMG 7466 / NCTC 11488 / FDC 602W) (Vibrio succinogenes)).